The chain runs to 104 residues: Probable quinol monooxygenase YgiN (104 aa).

The ABM domain maps to Leu-2 to Leu-100.

Homodimer.

It carries out the reaction menadiol + 2 O2 = menadione + 2 superoxide + 2 H(+). Its function is as follows. Can oxidize menadiol to menadione. This Escherichia coli O157:H7 protein is Probable quinol monooxygenase YgiN (ygiN).